Here is a 156-residue protein sequence, read N- to C-terminus: Small ribosomal subunit protein uS7 (156 aa).

This sequence belongs to the universal ribosomal protein uS7 family. As to quaternary structure, part of the 30S ribosomal subunit. Contacts proteins S9 and S11.

Its function is as follows. One of the primary rRNA binding proteins, it binds directly to 16S rRNA where it nucleates assembly of the head domain of the 30S subunit. Is located at the subunit interface close to the decoding center, probably blocks exit of the E-site tRNA. This Shewanella sediminis (strain HAW-EB3) protein is Small ribosomal subunit protein uS7.